The following is a 203-amino-acid chain: FMN-dependent NADH:quinone oxidoreductase (203 aa).

Residues Ser-9, 15 to 17 (SVS), and 138 to 141 (SRGG) each bind FMN.

Belongs to the azoreductase type 1 family. As to quaternary structure, homodimer. FMN is required as a cofactor.

The catalysed reaction is 2 a quinone + NADH + H(+) = 2 a 1,4-benzosemiquinone + NAD(+). The enzyme catalyses N,N-dimethyl-1,4-phenylenediamine + anthranilate + 2 NAD(+) = 2-(4-dimethylaminophenyl)diazenylbenzoate + 2 NADH + 2 H(+). Quinone reductase that provides resistance to thiol-specific stress caused by electrophilic quinones. Its function is as follows. Also exhibits azoreductase activity. Catalyzes the reductive cleavage of the azo bond in aromatic azo compounds to the corresponding amines. This is FMN-dependent NADH:quinone oxidoreductase from Methylorubrum extorquens (strain PA1) (Methylobacterium extorquens).